Consider the following 975-residue polypeptide: Glycine dehydrogenase (decarboxylating) (975 aa).

Residue K723 is modified to N6-(pyridoxal phosphate)lysine.

It belongs to the GcvP family. In terms of assembly, the glycine cleavage system is composed of four proteins: P, T, L and H. The cofactor is pyridoxal 5'-phosphate.

The enzyme catalyses N(6)-[(R)-lipoyl]-L-lysyl-[glycine-cleavage complex H protein] + glycine + H(+) = N(6)-[(R)-S(8)-aminomethyldihydrolipoyl]-L-lysyl-[glycine-cleavage complex H protein] + CO2. The glycine cleavage system catalyzes the degradation of glycine. The P protein binds the alpha-amino group of glycine through its pyridoxal phosphate cofactor; CO(2) is released and the remaining methylamine moiety is then transferred to the lipoamide cofactor of the H protein. The protein is Glycine dehydrogenase (decarboxylating) of Burkholderia ambifaria (strain ATCC BAA-244 / DSM 16087 / CCUG 44356 / LMG 19182 / AMMD) (Burkholderia cepacia (strain AMMD)).